Consider the following 446-residue polypeptide: F-box/LRR-repeat protein At4g29420 (446 aa).

Positions methionine 1 to tyrosine 51 constitute an F-box domain. LRR repeat units follow at residues valine 59–valine 84, aspartate 103–aspartate 130, serine 135–asparagine 160, phenylalanine 181–glycine 206, cysteine 223–cysteine 248, histidine 265–serine 289, glutamine 318–proline 343, and asparagine 382–isoleucine 407.

The chain is F-box/LRR-repeat protein At4g29420 from Arabidopsis thaliana (Mouse-ear cress).